The chain runs to 364 residues: UDP-N-acetylglucosamine--N-acetylmuramyl-(pentapeptide) pyrophosphoryl-undecaprenol N-acetylglucosamine transferase (364 aa).

Residues T10–G12, N128, R170, S199, I250, and Q295 each bind UDP-N-acetyl-alpha-D-glucosamine.

Belongs to the glycosyltransferase 28 family. MurG subfamily.

The protein resides in the cell inner membrane. It catalyses the reaction di-trans,octa-cis-undecaprenyl diphospho-N-acetyl-alpha-D-muramoyl-L-alanyl-D-glutamyl-meso-2,6-diaminopimeloyl-D-alanyl-D-alanine + UDP-N-acetyl-alpha-D-glucosamine = di-trans,octa-cis-undecaprenyl diphospho-[N-acetyl-alpha-D-glucosaminyl-(1-&gt;4)]-N-acetyl-alpha-D-muramoyl-L-alanyl-D-glutamyl-meso-2,6-diaminopimeloyl-D-alanyl-D-alanine + UDP + H(+). Its pathway is cell wall biogenesis; peptidoglycan biosynthesis. Its function is as follows. Cell wall formation. Catalyzes the transfer of a GlcNAc subunit on undecaprenyl-pyrophosphoryl-MurNAc-pentapeptide (lipid intermediate I) to form undecaprenyl-pyrophosphoryl-MurNAc-(pentapeptide)GlcNAc (lipid intermediate II). The protein is UDP-N-acetylglucosamine--N-acetylmuramyl-(pentapeptide) pyrophosphoryl-undecaprenol N-acetylglucosamine transferase of Chlorobaculum tepidum (strain ATCC 49652 / DSM 12025 / NBRC 103806 / TLS) (Chlorobium tepidum).